Consider the following 284-residue polypeptide: Ribose-5-phosphate isomerase (284 aa).

It belongs to the ribose 5-phosphate isomerase family.

It is found in the cytoplasm. The catalysed reaction is aldehydo-D-ribose 5-phosphate = D-ribulose 5-phosphate. Its pathway is carbohydrate degradation; pentose phosphate pathway; D-ribose 5-phosphate from D-ribulose 5-phosphate (non-oxidative stage): step 1/1. In Lodderomyces elongisporus (strain ATCC 11503 / CBS 2605 / JCM 1781 / NBRC 1676 / NRRL YB-4239) (Yeast), this protein is Ribose-5-phosphate isomerase (RKI1).